Consider the following 1431-residue polypeptide: DNA polymerase II large subunit (1431 aa).

The disordered stretch occupies residues 1388–1431 (LLENFANGYNKGKKEEMPKKQRKKEQEKSKKRKVISLDDFFSRK). Positions 1399–1415 (GKKEEMPKKQRKKEQEK) are enriched in basic and acidic residues.

This sequence belongs to the archaeal DNA polymerase II family. Heterodimer of a large subunit and a small subunit. Post-translationally, this protein undergoes a protein self splicing that involves a post-translational excision of the intervening region (intein) followed by peptide ligation.

It carries out the reaction DNA(n) + a 2'-deoxyribonucleoside 5'-triphosphate = DNA(n+1) + diphosphate. The enzyme catalyses Exonucleolytic cleavage in the 3'- to 5'-direction to yield nucleoside 5'-phosphates.. Possesses two activities: a DNA synthesis (polymerase) and an exonucleolytic activity that degrades single-stranded DNA in the 3'- to 5'-direction. Has a template-primer preference which is characteristic of a replicative DNA polymerase. This is DNA polymerase II large subunit (polC) from Pyrococcus horikoshii (strain ATCC 700860 / DSM 12428 / JCM 9974 / NBRC 100139 / OT-3).